Here is a 506-residue protein sequence, read N- to C-terminus: Maturase K (506 aa).

It belongs to the intron maturase 2 family. MatK subfamily.

The protein localises to the plastid. It is found in the chloroplast. In terms of biological role, usually encoded in the trnK tRNA gene intron. Probably assists in splicing its own and other chloroplast group II introns. The chain is Maturase K from Mimosa pudica (Sensitive plant).